The chain runs to 397 residues: Elongation factor Tu (397 aa).

Positions 10–207 (KPHVNVGTIG…TLDTYIPEPV (198 aa)) constitute a tr-type G domain. Residues 19–26 (GHVDHGKT) form a G1 region. 19-26 (GHVDHGKT) provides a ligand contact to GTP. Threonine 26 is a Mg(2+) binding site. The tract at residues 60–64 (GITIN) is G2. Residues 81 to 84 (DCPG) are G3. GTP is bound by residues 81-85 (DCPGH) and 136-139 (NKAD). The segment at 136–139 (NKAD) is G4. The G5 stretch occupies residues 174 to 176 (SAL).

The protein belongs to the TRAFAC class translation factor GTPase superfamily. Classic translation factor GTPase family. EF-Tu/EF-1A subfamily. As to quaternary structure, monomer.

It localises to the cytoplasm. The catalysed reaction is GTP + H2O = GDP + phosphate + H(+). Its function is as follows. GTP hydrolase that promotes the GTP-dependent binding of aminoacyl-tRNA to the A-site of ribosomes during protein biosynthesis. The chain is Elongation factor Tu from Ectopseudomonas mendocina (strain ymp) (Pseudomonas mendocina).